Consider the following 355-residue polypeptide: Guanine nucleotide-binding protein alpha-2 subunit (355 aa).

The segment at Met1–Leu20 is disordered. One can recognise a G-alpha domain in the interval Lys33 to Leu355. The interval Lys36–Thr49 is G1 motif. GTP contacts are provided by Glu44, Ser45, Gly46, Lys47, Ser48, Thr49, Asp151, Leu176, Thr182, Gly204, Asn270, Lys271, Asp273, and Ala328. Ser48 serves as a coordination point for Mg(2+). Positions Asp174–Thr182 are G2 motif. Position 182 (Thr182) interacts with Mg(2+). Residues Tyr197–Arg206 form a G3 motif region. The interval Ile266 to Asp273 is G4 motif. Positions Thr326 to Thr331 are G5 motif.

It belongs to the G-alpha family. G(q) subfamily. G proteins are composed of 3 units; alpha, beta and gamma. The alpha chain contains the guanine nucleotide binding site. Mg(2+) is required as a cofactor.

Functionally, guanine nucleotide-binding proteins (G proteins) are involved as modulators or transducers in various transmembrane signaling systems. This Neurospora crassa (strain ATCC 24698 / 74-OR23-1A / CBS 708.71 / DSM 1257 / FGSC 987) protein is Guanine nucleotide-binding protein alpha-2 subunit (gna-2).